Here is an 893-residue protein sequence, read N- to C-terminus: Exocyst complex component 4 (893 aa).

Positions 1-27 (MNENGATPVAAARRHRPLPAERATSNS) are disordered.

This sequence belongs to the SEC8 family. As to quaternary structure, the exocyst complex is composed of sec-3/exoc1, sec-5/exoc2, sec-6/exoc3, sec-8/exoc4, sec-10/exoc5, sec-15/exoc6, exo-70/exoc7 and exo-84/exoc8. In terms of tissue distribution, pseudocoelom.

Functionally, component of the exocyst complex involved in the docking of exocytic vesicles with fusion sites on the plasma membrane. This is Exocyst complex component 4 (sec-8) from Caenorhabditis elegans.